Consider the following 76-residue polypeptide: Conotoxin Cal5a L2 (76 aa).

The first 22 residues, 1–22 (MRFYIGLMAALMLTSILRTDSA), serve as a signal peptide directing secretion. The propeptide occupies 23-42 (SVGQTGTKSELALIERVIRQ). A 4-hydroxyproline modification is found at P50. Residues P58, P62, and P64 each carry the 4-hydroxyproline; partial modification.

It belongs to the conotoxin T superfamily. Contains 2 disulfide bonds that can be either 'C1-C3, C2-C4' or 'C1-C4, C2-C3', since these disulfide connectivities have been observed for conotoxins with cysteine framework V (for examples, see AC P0DQQ7 and AC P81755). In terms of tissue distribution, expressed by the venom duct.

The protein localises to the secreted. Functionally, probable neurotoxin with unknown target. Possibly targets ion channels. The chain is Conotoxin Cal5a L2 from Californiconus californicus (California cone).